A 150-amino-acid chain; its full sequence is MSWQSYVDDSLVGSGFMHSAAIVGLADGSYWAYGGTYVPQPEEVTHILKCLENFSLVQSSGVTICGVKFFGLQSGSEGQMKYIFFKKGAAGGCIYTSKQTAIIAVYGNPGDASALQQDLQKTEATYVAVNPADCNTTVKRIAEYLISLDY.

The protein belongs to the profilin family. As to quaternary structure, occurs in many kinds of cells as a complex with monomeric actin in a 1:1 ratio.

The protein localises to the cytoplasm. Its subcellular location is the cytoskeleton. Functionally, binds to actin and affects the structure of the cytoskeleton. At high concentrations, profilin prevents the polymerization of actin, whereas it enhances it at low concentrations. By binding to PIP2, it inhibits the formation of IP3 and DG. The polypeptide is Profilin (Trypanosoma brucei brucei).